Here is a 367-residue protein sequence, read N- to C-terminus: Glutamate 5-kinase 2 (367 aa).

Residue Lys-10 coordinates ATP. Ser-50, Asp-136, and Asn-148 together coordinate substrate. ATP-binding positions include 168 to 169 and 210 to 216; these read TD and TGGMATK. Residues 275–353 form the PUA domain; it reads SGQIVIDAGA…KQIGELLDYD (79 aa).

This sequence belongs to the glutamate 5-kinase family.

Its subcellular location is the cytoplasm. It carries out the reaction L-glutamate + ATP = L-glutamyl 5-phosphate + ADP. Its pathway is amino-acid biosynthesis; L-proline biosynthesis; L-glutamate 5-semialdehyde from L-glutamate: step 1/2. In terms of biological role, catalyzes the transfer of a phosphate group to glutamate to form L-glutamate 5-phosphate. This chain is Glutamate 5-kinase 2, found in Pseudoalteromonas translucida (strain TAC 125).